Here is a 273-residue protein sequence, read N- to C-terminus: DnaJ homolog subfamily C member 27 (273 aa).

Residues 1–18 are required for interaction with MAPK1; sequence MEANMPKRKEPGRSLRIK. GTP is bound by residues 23-30, 71-75, and 134-137; these read GNAEVGKS, DMAGH, and NKID. Residues 217–273 enclose the J domain; that stretch reads DSWDMLGVKPGASRDEVNKAYRKLAVLLHPDKCVAPGSEDAFKAVVNARTALLKNIK.

It belongs to the small GTPase superfamily. Rab family. Interacts directly with MAPK1 (wild-type and kinase-deficient forms). Interacts directly (in GTP-bound form) with MAP2K1 (wild-type and kinase-deficient forms). In terms of tissue distribution, overexpressed in gastrointestinal cancers; expression correlates with later tumor-node-metastasis stages of colorectal cancers.

It is found in the nucleus. Its function is as follows. GTPase which can activate the MEK/ERK pathway and induce cell transformation when overexpressed. May act as a nuclear scaffold for MAPK1, probably by association with MAPK1 nuclear export signal leading to enhanced ERK1/ERK2 signaling. The polypeptide is DnaJ homolog subfamily C member 27 (DNAJC27) (Homo sapiens (Human)).